The chain runs to 200 residues: TATA-box-binding protein 2 (200 aa).

2 consecutive repeat copies span residues 25–101 and 115–192.

It belongs to the TBP family. In terms of assembly, belongs to the TFIID complex together with the TBP-associated factors (TAFs). Binds DNA as monomer.

Its subcellular location is the nucleus. In terms of biological role, general transcription factor that functions at the core of the DNA-binding multiprotein factor TFIID. Binding of TFIID to the TATA box is the initial transcriptional step of the pre-initiation complex (PIC), playing a role in the activation of eukaryotic genes transcribed by RNA polymerase II. This Zea mays (Maize) protein is TATA-box-binding protein 2 (TBP2).